The chain runs to 124 residues: Protein BEX3 (124 aa).

The tract at residues 1–56 (MANVHQENEEMEQPLQNGQEDRPVGGGEGHQPAANNNNNNHNHNHNHHRRGQARRL) is disordered. The span at 42 to 53 (NHNHNHHRRGQA) shows a compositional bias: basic residues. Residues 81 to 106 (EMFMEEMREIRRKLRELQLRNCLRIL) are interaction with p75NTR/NGFR. The segment at 81–124 (EMFMEEMREIRRKLRELQLRNCLRILMGELSNHHDHHDEFCLMP) is interaction with 14-3-3 epsilon. The Nuclear export signal motif lies at 90 to 100 (IRRKLRELQLR). The his cluster stretch occupies residues 113–117 (HHDHH). Position 121 (cysteine 121) interacts with Zn(2+).

Belongs to the BEX family. As to quaternary structure, self-associates. Binds to the DEATH domain of p75NTR/NGFR. Interacts with 14-3-3 epsilon (YWHAE). Interacts with DIABLO/SMAC. Ubiquitinated. Degraded by the proteasome. As to expression, widely expressed.

It localises to the nucleus. The protein resides in the cytoplasm. It is found in the cytosol. Functionally, may be a signaling adapter molecule involved in NGFR/p75NTR-mediated apoptosis induced by NGF. Plays a role in zinc-triggered neuronal death. In absence of reductive stress, acts as a pseudosubstrate for the CRL2(FEM1B) complex: associates with FEM1B via zinc, thereby preventing association between FEM1B and its substrates. This Mus musculus (Mouse) protein is Protein BEX3.